A 651-amino-acid polypeptide reads, in one-letter code: Probable ATP-dependent helicase MJ0942 (651 aa).

The Helicase ATP-binding domain occupies 6–255 (YIKEKFPYPK…EIIEKYLTSR (250 aa)). 41 to 48 (APTGVGKT) is an ATP binding site. Residues cysteine 102, cysteine 149, and cysteine 154 each contribute to the [4Fe-4S] cluster site. The short motif at 195–198 (DEAH) is the DEAH box element. In terms of domain architecture, Helicase C-terminal spans 449 to 638 (NLLKILEAIN…NYEVMSLDMA (190 aa)).

This sequence belongs to the helicase family. DinG subfamily. [4Fe-4S] cluster serves as cofactor.

It catalyses the reaction Couples ATP hydrolysis with the unwinding of duplex DNA at the replication fork by translocating in the 5'-3' direction. This creates two antiparallel DNA single strands (ssDNA). The leading ssDNA polymer is the template for DNA polymerase III holoenzyme which synthesizes a continuous strand.. The catalysed reaction is ATP + H2O = ADP + phosphate + H(+). Functionally, might be a 5'-3' DNA helicase. The polypeptide is Probable ATP-dependent helicase MJ0942 (Methanocaldococcus jannaschii (strain ATCC 43067 / DSM 2661 / JAL-1 / JCM 10045 / NBRC 100440) (Methanococcus jannaschii)).